A 50-amino-acid chain; its full sequence is U37-theraphotoxin-Cg1a (50 aa).

The N-terminal stretch at 1 to 19 (MRVLLIIAGLALLSVVCYT) is a signal peptide.

Belongs to the neurotoxin 10 (Hwtx-1) family. 67 (Jztx-67) subfamily. Expressed by the venom gland.

The protein resides in the secreted. The polypeptide is U37-theraphotoxin-Cg1a (Chilobrachys guangxiensis (Chinese earth tiger tarantula)).